We begin with the raw amino-acid sequence, 289 residues long: 4-hydroxy-tetrahydrodipicolinate synthase (289 aa).

Threonine 43 lines the pyruvate pocket. Catalysis depends on tyrosine 131, which acts as the Proton donor/acceptor. The Schiff-base intermediate with substrate role is filled by lysine 160. Position 200 (valine 200) interacts with pyruvate.

Belongs to the DapA family. In terms of assembly, homotetramer; dimer of dimers.

It is found in the cytoplasm. It carries out the reaction L-aspartate 4-semialdehyde + pyruvate = (2S,4S)-4-hydroxy-2,3,4,5-tetrahydrodipicolinate + H2O + H(+). It participates in amino-acid biosynthesis; L-lysine biosynthesis via DAP pathway; (S)-tetrahydrodipicolinate from L-aspartate: step 3/4. Functionally, catalyzes the condensation of (S)-aspartate-beta-semialdehyde [(S)-ASA] and pyruvate to 4-hydroxy-tetrahydrodipicolinate (HTPA). This is 4-hydroxy-tetrahydrodipicolinate synthase from Methanococcus maripaludis (strain C6 / ATCC BAA-1332).